A 193-amino-acid polypeptide reads, in one-letter code: 7-methyl-GTP pyrophosphatase (193 aa).

Aspartate 70 (proton acceptor) is an active-site residue.

The protein belongs to the Maf family. YceF subfamily. A divalent metal cation serves as cofactor.

It localises to the cytoplasm. The enzyme catalyses N(7)-methyl-GTP + H2O = N(7)-methyl-GMP + diphosphate + H(+). Nucleoside triphosphate pyrophosphatase that hydrolyzes 7-methyl-GTP (m(7)GTP). May have a dual role in cell division arrest and in preventing the incorporation of modified nucleotides into cellular nucleic acids. This Photobacterium profundum (strain SS9) protein is 7-methyl-GTP pyrophosphatase.